The sequence spans 206 residues: MELKLLNSNGQEGAVVNASDVVFGRDYNEALIHQVVVAYQANARQGNRAQKDREQVKHTTKKPWRQKGTGRARAGMSSSPLWRGGGRIFPNSPDENFSHKVNKKMHRAGLCSIFSQLAREGRLSVVEDIVLEAPKTKLLADKFKAMGLDSVLVITDTVDENLYLASRNLPHVAVVEPRYADPLSLIYFKKVLVTKAAVAQIEELLS.

The segment at 45 to 85 (QGNRAQKDREQVKHTTKKPWRQKGTGRARAGMSSSPLWRGG) is disordered. Basic residues predominate over residues 58–70 (HTTKKPWRQKGTG).

This sequence belongs to the universal ribosomal protein uL4 family. In terms of assembly, part of the 50S ribosomal subunit.

Functionally, one of the primary rRNA binding proteins, this protein initially binds near the 5'-end of the 23S rRNA. It is important during the early stages of 50S assembly. It makes multiple contacts with different domains of the 23S rRNA in the assembled 50S subunit and ribosome. Its function is as follows. Forms part of the polypeptide exit tunnel. The chain is Large ribosomal subunit protein uL4 from Burkholderia mallei (strain NCTC 10247).